The following is a 198-amino-acid chain: Large ribosomal subunit protein bL12m (198 aa).

Residues 1–36 constitute a mitochondrion transit peptide; it reads MLPAAARPLWGPCLGLRAAAFRLARRQVPCVCAVRH. 4 positions are modified to N6-acetyllysine: Lys125, Lys138, Lys142, and Lys144. Lys150 bears the N6-acetyllysine; alternate mark. Lys150 carries the post-translational modification N6-succinyllysine; alternate. Residue Lys150 forms a Glycyl lysine isopeptide (Lys-Gly) (interchain with G-Cter in ubiquitin) linkage. Lys162 carries the post-translational modification N6-succinyllysine. Residues Lys163 and Lys173 each carry the N6-acetyllysine modification. Lys178 bears the N6-acetyllysine; alternate mark. Position 178 is an N6-succinyllysine; alternate (Lys178). Residue Lys185 is modified to N6-acetyllysine.

It belongs to the bacterial ribosomal protein bL12 family. In terms of assembly, component of the mitochondrial large ribosomal subunit (mt-LSU). Mature mammalian 55S mitochondrial ribosomes consist of a small (28S) and a large (39S) subunit. The 28S small subunit contains a 12S ribosomal RNA (12S mt-rRNA) and 30 different proteins. The 39S large subunit contains a 16S rRNA (16S mt-rRNA), a copy of mitochondrial valine transfer RNA (mt-tRNA(Val)), which plays an integral structural role, and 52 different proteins. bL12m interacts with NOA1. Post-translationally, two mature forms are produced by differential two-step proteolytic cleavage. Cleaved by the mitochondrial processing protease to produce the long mature form and subsequently by the mitochondrial intermediate protease to produce the short mature form. In terms of processing, in the presence of CUL3, undergoes 'Lys-63'-linked ubiquitination at Lys-150 which results in proteasomal degradation.

It is found in the mitochondrion matrix. In terms of biological role, as a component of the mitochondrial large ribosomal subunit, plays a role in mitochondrial translation. When present in mitochondria as a free protein not associated with the ribosome, associates with mitochondrial RNA polymerase POLRMT to activate transcription. Required for POLRMT stability. This is Large ribosomal subunit protein bL12m (MRPL12) from Homo sapiens (Human).